Here is a 138-residue protein sequence, read N- to C-terminus: MELIRFSISIPSKLLEKFDQIIEEIGYENRSEAIRDLIRDFIIRHEWEVGNEEVAGTITIVYNHDEGDVVKALLDLQHEYLDEIISSLHVHMDEHNCLEVIVVKGEAKKIKMIADKLLSLKGVKHGKLVMTSTGKELV.

Histidine 78, histidine 89, histidine 91, and cysteine 97 together coordinate Ni(2+).

This sequence belongs to the transcriptional regulatory CopG/NikR family. It depends on Ni(2+) as a cofactor.

In terms of biological role, transcriptional regulator. The chain is Putative nickel-responsive regulator from Pyrococcus horikoshii (strain ATCC 700860 / DSM 12428 / JCM 9974 / NBRC 100139 / OT-3).